Consider the following 110-residue polypeptide: Large ribosomal subunit protein uL22 (110 aa).

It belongs to the universal ribosomal protein uL22 family. In terms of assembly, part of the 50S ribosomal subunit.

This protein binds specifically to 23S rRNA; its binding is stimulated by other ribosomal proteins, e.g. L4, L17, and L20. It is important during the early stages of 50S assembly. It makes multiple contacts with different domains of the 23S rRNA in the assembled 50S subunit and ribosome. In terms of biological role, the globular domain of the protein is located near the polypeptide exit tunnel on the outside of the subunit, while an extended beta-hairpin is found that lines the wall of the exit tunnel in the center of the 70S ribosome. This Marinomonas sp. (strain MWYL1) protein is Large ribosomal subunit protein uL22.